The chain runs to 217 residues: ATP phosphoribosyltransferase (217 aa).

The protein belongs to the ATP phosphoribosyltransferase family. Short subfamily. Heteromultimer composed of HisG and HisZ subunits.

It localises to the cytoplasm. It carries out the reaction 1-(5-phospho-beta-D-ribosyl)-ATP + diphosphate = 5-phospho-alpha-D-ribose 1-diphosphate + ATP. Its pathway is amino-acid biosynthesis; L-histidine biosynthesis; L-histidine from 5-phospho-alpha-D-ribose 1-diphosphate: step 1/9. Catalyzes the condensation of ATP and 5-phosphoribose 1-diphosphate to form N'-(5'-phosphoribosyl)-ATP (PR-ATP). Has a crucial role in the pathway because the rate of histidine biosynthesis seems to be controlled primarily by regulation of HisG enzymatic activity. The protein is ATP phosphoribosyltransferase of Parasynechococcus marenigrum (strain WH8102).